The chain runs to 491 residues: MDYVLIVLPLALFLIAYKFLFSSKTQGFNLPPGPTPFPIVGHLHLVKPPVHRLFRRFAEKYGDIFSLRYGSRQVVVISSLPLVRESFTGQNDVILTNRPHFLTAKYVAYDYTTIGTAAYGDHWRNLRRICSLEILSSNRLTGFLSVRKDEIRRLLTKLSREYDGRVVELEPLLADLTFNNIVRMVTGRRYYGDQVHNKEEANLFKKLVTDINDNSGASHPGDYLPILKVFGHGYEKKVKALGEAMDAFLQRLLDECRINGESNTMVSHLLSLQLDQPKYYSDVIIKGLMLSMMLAGTDTAAVTLEWAMANLLKKPEVLKKAKAEIDEKIGEERLVDEPDIANLPYLQNIVSETFRLCPAAPLLVPRSPSEDLKIGGYDIPRGTIVLVNAWAIHRDPRLWDEPEKFMPERFEDQEASKKLMVFGNGRRTCPGATLGQRMVLLALGSLIQCFDWEKVNGEDVDMTENPGMAMRKLVQLRAVCHKRPIMTNLLA.

The chain crosses the membrane as a helical span at residues 283–303; sequence VIIKGLMLSMMLAGTDTAAVT. C429 contributes to the heme binding site.

The protein belongs to the cytochrome P450 family. It depends on heme as a cofactor.

It localises to the membrane. It participates in secondary metabolite biosynthesis. Involved in indole glucosinolate biosynthesis. Catalyzes hydroxylation reactions of the glucosinolate indole ring. Converts indol-3-yl-methylglucosinolate (I3M) to 4-hydroxy-indol-3-yl-methylglucosinolate (4OH-I3M) and/or 1-hydroxy-indol-3-yl-methylglucosinolate (1OH-I3M) intermediates. These hydroxy intermediates are converted to 4-methoxy-indol-3-yl-methylglucosinolate (4MO-I3M) and 1-methoxy-indol-3-yl-methylglucosinolate (1MO-I3M) by indole glucosinolate methyltransferase 1 and 2 (IGMT1 and IGMT2). Contributes to defense against the green peach aphid (Myzus persicae), a generalist phloem-feeding herbivore. Required for the biosynthesis of antifungal indole glucosinolate metabolites. Required for the pathogen-induced accumulation of 4MO-I3M, which in turn is activated by the atypical BGLU26/PEN2 myrosinase. Required for the biosynthesis of Trp-derived antifungal compounds and non-host resistance to the necrotrophic fungal pathogen Plectosphaerella cucumerina. Required for resistance to the non-adapted fungal pathogen Colletotrichum gloeosporioides. The chain is Cytochrome P450 81F2 from Arabidopsis thaliana (Mouse-ear cress).